Reading from the N-terminus, the 290-residue chain is MAMEGYRGFLGLLVSALLVGFLSVIFVLIWVLHFREGLGWNGSGLEFNWHPVLAVTGFVFIQGIAIIVYRLPWTWKCSKLLMKSIHAGLNAVAAILAIISVVAVFEYHNVQKVPHMYSLHSWVGLTALILYIQQLVVGFFVFLLPWAPPSLRAIVMPIHVYSGLLLFGTVIATVLMGVTEKLFFVLKHPSYHSFPPEGVFTNTLGLLILVFGALIFWIVTRPQWKRPREPGSVPLQLNGGNAECRMEGAIAISSAHSMDAADPADAESSSEGAARKRTLGLADSGQRSTM.

Residues 1-7 (MAMEGYR) lie on the Cytoplasmic side of the membrane. The chain crosses the membrane as a helical span at residues 8–32 (GFLGLLVSALLVGFLSVIFVLIWVL). The region spanning 15–220 (SALLVGFLSV…FGALIFWIVT (206 aa)) is the Cytochrome b561 domain. At 33–47 (HFREGLGWNGSGLEF) the chain is on the extracellular side. Residues 48–69 (NWHPVLAVTGFVFIQGIAIIVY) traverse the membrane as a helical segment. His50, Arg70, and Lys79 together coordinate heme b. At 70–78 (RLPWTWKCS) the chain is on the cytoplasmic side. L-ascorbate is bound by residues Lys79 and Lys83. The chain crosses the membrane as a helical span at residues 79 to 105 (KLLMKSIHAGLNAVAAILAIISVVAVF). His86 is a heme b binding site. Residues 106 to 118 (EYHNVQKVPHMYS) are Extracellular-facing. His108 contributes to the Fe(3+) binding site. Residues 115 to 118 (HMYS) and His120 contribute to the heme b site. A helical transmembrane segment spans residues 119 to 144 (LHSWVGLTALILYIQQLVVGFFVFLL). At 145–151 (PWAPPSL) the chain is on the cytoplasmic side. Residue Arg152 coordinates L-ascorbate. Residues 152 to 179 (RAIVMPIHVYSGLLLFGTVIATVLMGVT) traverse the membrane as a helical segment. Positions 159 and 180 each coordinate heme b. At 180 to 197 (EKLFFVLKHPSYHSFPPE) the chain is on the extracellular side. The chain crosses the membrane as a helical span at residues 198-222 (GVFTNTLGLLILVFGALIFWIVTRP). The Cytoplasmic portion of the chain corresponds to 223–290 (QWKRPREPGS…LADSGQRSTM (68 aa)). Lys225 provides a ligand contact to heme b. Ser232 is modified (phosphoserine). The tract at residues 257–290 (SMDAADPADAESSSEGAARKRTLGLADSGQRSTM) is disordered. Residues 260 to 272 (AADPADAESSSEG) are compositionally biased toward low complexity. Position 289 is a phosphothreonine (Thr289).

Homodimer. The cofactor is heme b. Highly expressed in the brush-border membrane of duodenal enterocytes (at protein level). Also expressed in liver and spleen.

The protein localises to the cell membrane. The protein resides in the apical cell membrane. The enzyme catalyses Fe(3+)(out) + L-ascorbate(in) = monodehydro-L-ascorbate radical(in) + Fe(2+)(out) + H(+). The catalysed reaction is Cu(2+)(out) + L-ascorbate(in) = Cu(+)(out) + monodehydro-L-ascorbate radical(in) + H(+). It carries out the reaction monodehydro-L-ascorbate radical(out) + L-ascorbate(in) = monodehydro-L-ascorbate radical(in) + L-ascorbate(out). Plasma membrane reductase that uses cytoplasmic ascorbate as an electron donor to reduce extracellular Fe(3+) into Fe(2+). Probably functions in dietary iron absorption at the brush border of duodenal enterocytes by producing Fe(2+), the divalent form of iron that can be transported into enterocytes. It is also able to reduce extracellular monodehydro-L-ascorbate and may be involved in extracellular ascorbate regeneration by erythrocytes in blood. May also act as a ferrireductase in airway epithelial cells. May also function as a cupric transmembrane reductase. This is Plasma membrane ascorbate-dependent reductase CYBRD1 from Mus musculus (Mouse).